Reading from the N-terminus, the 598-residue chain is Pantothenate kinase 1 (598 aa).

Positions 32–161 are disordered; that stretch reads ARPGDQGKAG…SPGAPVGTSA (130 aa). Over residues 38–49 the composition is skewed to gly residues; the sequence is GKAGGGSPGWGC. Ser-215 carries the post-translational modification Phosphoserine. Positions 218–235 match the Nucleolar localization signal motif; the sequence is KKCRLRRRMDSGRKNRPP. Catalysis depends on Glu-363, which acts as the Proton acceptor. Ser-417, Ser-420, and Arg-432 together coordinate acetyl-CoA.

Belongs to the type II pantothenate kinase family. In terms of assembly, homodimer. In terms of tissue distribution, expressed at high levels in brain, heart, kidney, liver, skeletal muscle and testis. As to expression, detected at much lower levels in kidney, liver, brain and testis and not detected in heart or skeletal muscle.

Its subcellular location is the cytoplasm. The protein localises to the nucleus. It localises to the nucleolus. It is found in the cytosol. The protein resides in the cytoplasmic vesicle. Its subcellular location is the clathrin-coated vesicle. The protein localises to the recycling endosome. It catalyses the reaction (R)-pantothenate + ATP = (R)-4'-phosphopantothenate + ADP + H(+). It participates in cofactor biosynthesis; coenzyme A biosynthesis; CoA from (R)-pantothenate: step 1/5. Its activity is regulated as follows. Regulated by feedback inhibition by CoA and its thioesters. Its function is as follows. Catalyzes the phosphorylation of pantothenate to generate 4'-phosphopantothenate in the first and rate-determining step of coenzyme A (CoA) synthesis. In Homo sapiens (Human), this protein is Pantothenate kinase 1 (PANK1).